The sequence spans 257 residues: Imidazole glycerol phosphate synthase subunit HisF (257 aa).

Catalysis depends on residues Asp-11 and Asp-130.

It belongs to the HisA/HisF family. Heterodimer of HisH and HisF.

Its subcellular location is the cytoplasm. It carries out the reaction 5-[(5-phospho-1-deoxy-D-ribulos-1-ylimino)methylamino]-1-(5-phospho-beta-D-ribosyl)imidazole-4-carboxamide + L-glutamine = D-erythro-1-(imidazol-4-yl)glycerol 3-phosphate + 5-amino-1-(5-phospho-beta-D-ribosyl)imidazole-4-carboxamide + L-glutamate + H(+). Its pathway is amino-acid biosynthesis; L-histidine biosynthesis; L-histidine from 5-phospho-alpha-D-ribose 1-diphosphate: step 5/9. IGPS catalyzes the conversion of PRFAR and glutamine to IGP, AICAR and glutamate. The HisF subunit catalyzes the cyclization activity that produces IGP and AICAR from PRFAR using the ammonia provided by the HisH subunit. This is Imidazole glycerol phosphate synthase subunit HisF from Vibrio cholerae serotype O1 (strain ATCC 39541 / Classical Ogawa 395 / O395).